A 518-amino-acid chain; its full sequence is Sensor protein kinase HptS (518 aa).

2 consecutive transmembrane segments (helical) span residues 20-40 (IFPV…IYIW) and 222-242 (GITL…FGFI). Residues 297 to 513 (EQLIHSIEHT…LICYKIPLSR (217 aa)) enclose the Histidine kinase domain. Residue H325 is modified to Phosphohistidine; by autocatalysis.

In terms of processing, autophosphorylated.

It is found in the cell membrane. It catalyses the reaction ATP + protein L-histidine = ADP + protein N-phospho-L-histidine.. Its function is as follows. Member of the two-component regulatory system HptS/HptR that regulates genes involved in hexose phosphate transport system in response to changes in extracellular phosphate sources. May act as a sensor protein kinase which is autophosphorylated at a histidine residue and transfers its phosphate group to the conserved aspartic acid residue in the regulatory domain of HptS. In turn, HptS antagonizes CcpA-dependent transcription of a subset of CcpA-regulated genes involved in antibiotic susceptibility. The sequence is that of Sensor protein kinase HptS (hptS) from Staphylococcus aureus (strain MRSA252).